The primary structure comprises 157 residues: SsrA-binding protein (157 aa).

A disordered region spans residues Val132–Lys157. Positions Lys135 to Lys157 are enriched in basic and acidic residues.

It belongs to the SmpB family.

Its subcellular location is the cytoplasm. In terms of biological role, required for rescue of stalled ribosomes mediated by trans-translation. Binds to transfer-messenger RNA (tmRNA), required for stable association of tmRNA with ribosomes. tmRNA and SmpB together mimic tRNA shape, replacing the anticodon stem-loop with SmpB. tmRNA is encoded by the ssrA gene; the 2 termini fold to resemble tRNA(Ala) and it encodes a 'tag peptide', a short internal open reading frame. During trans-translation Ala-aminoacylated tmRNA acts like a tRNA, entering the A-site of stalled ribosomes, displacing the stalled mRNA. The ribosome then switches to translate the ORF on the tmRNA; the nascent peptide is terminated with the 'tag peptide' encoded by the tmRNA and targeted for degradation. The ribosome is freed to recommence translation, which seems to be the essential function of trans-translation. The chain is SsrA-binding protein from Francisella tularensis subsp. novicida (strain U112).